The sequence spans 475 residues: 3-isopropylmalate dehydratase large subunit (475 aa).

[4Fe-4S] cluster contacts are provided by C352, C412, and C415.

Belongs to the aconitase/IPM isomerase family. LeuC type 1 subfamily. As to quaternary structure, heterodimer of LeuC and LeuD. The cofactor is [4Fe-4S] cluster.

It carries out the reaction (2R,3S)-3-isopropylmalate = (2S)-2-isopropylmalate. It participates in amino-acid biosynthesis; L-leucine biosynthesis; L-leucine from 3-methyl-2-oxobutanoate: step 2/4. Its function is as follows. Catalyzes the isomerization between 2-isopropylmalate and 3-isopropylmalate, via the formation of 2-isopropylmaleate. The protein is 3-isopropylmalate dehydratase large subunit of Gluconobacter oxydans (strain 621H) (Gluconobacter suboxydans).